Consider the following 232-residue polypeptide: Probable GTP-binding protein EngB (232 aa).

The 176-residue stretch at 13–188 (IGLEVAFAGR…AGVMGNWYEY (176 aa)) folds into the EngB-type G domain. Residues 21 to 28 (GRSNAGKS), 48 to 52 (GRTQM), 67 to 70 (DLPG), 134 to 137 (TKAD), and 167 to 169 (FSA) contribute to the GTP site. 2 residues coordinate Mg(2+): S28 and T50.

The protein belongs to the TRAFAC class TrmE-Era-EngA-EngB-Septin-like GTPase superfamily. EngB GTPase family. The cofactor is Mg(2+).

In terms of biological role, necessary for normal cell division and for the maintenance of normal septation. This is Probable GTP-binding protein EngB from Psychrobacter arcticus (strain DSM 17307 / VKM B-2377 / 273-4).